A 377-amino-acid chain; its full sequence is Prostaglandin reductase-3 (377 aa).

Position 35 is an N6-acetyllysine (Lys35). The NADP(+) site is built by Thr185, Ser205, Lys209, Tyr224, Ser247, Ile269, and Tyr275. Ser299 is modified (phosphoserine). NADP(+)-binding positions include 303–305 (FFL) and Asn361.

It belongs to the zinc-containing alcohol dehydrogenase family. Quinone oxidoreductase subfamily. In terms of tissue distribution, widely expressed.

It localises to the peroxisome. The enzyme catalyses 13,14-dihydro-15-oxo-prostaglandin E2 + NADP(+) = 15-oxoprostaglandin E2 + NADPH + H(+). It carries out the reaction 13,14-dihydro-15-oxo-prostaglandin E1 + NADP(+) = 15-oxoprostaglandin E1 + NADPH + H(+). It catalyses the reaction 13,14-dihydro-15-oxo-PGF2alpha + NADP(+) = 15-oxoprostaglandin F2alpha + NADPH + H(+). The catalysed reaction is 13,14-dihydro-15-oxo-prostaglandin F1alpha + NADP(+) = 15-oxoprostaglandin F1alpha + NADPH + H(+). Functions as 15-oxo-prostaglandin 13-reductase and acts on 15-keto-PGE1, 15-keto-PGE2, 15-keto-PGE1-alpha and 15-keto-PGE2-alpha with highest efficiency towards 15-keto-PGE2-alpha. Overexpression represses transcriptional activity of PPARG and inhibits adipocyte differentiation. This chain is Prostaglandin reductase-3, found in Mus musculus (Mouse).